Consider the following 392-residue polypeptide: MKGLDDSIGRFLDGLDQAGRKRVLRPVDPLPAGRVRVGGRELVNFSSNDYLGLSRHPEVVERSRRWLNEYGAGSGASRLVTGHLAAMEALEAKIARCKQTEAALILASGWQCNASVLPALLDKALWGAEPLVFADKLIHASLHAGLELSGARRYRYRHDDLDHLESLLKAHADKEGPRFIVTETVFSMDGDVTDMAALAALASRWDAFLYVDEAHATGVLGANGFGLSPGMGAELAMGTFSKGLGSFGAYVACSARLRHYLINRASGLIYATGLPPAVLGAIDAALDLVPRLEGERTRLQMMGRRLRDGLRAAGLDTGPSASQIVPLILGDEGRTLAVAKALEDRGILGIAIRPPTVPPGTSRIRFALSAVHSDADLDRLLAAILDAVEATP.

Arg-22 is a binding site for substrate. 109-110 contributes to the pyridoxal 5'-phosphate binding site; that stretch reads GW. His-139 contacts substrate. Pyridoxal 5'-phosphate is bound by residues Ser-187, 212 to 215, and 239 to 242; these read DEAH and TFSK. N6-(pyridoxal phosphate)lysine is present on Lys-242. Thr-356 contacts substrate.

The protein belongs to the class-II pyridoxal-phosphate-dependent aminotransferase family. BioF subfamily. In terms of assembly, homodimer. Pyridoxal 5'-phosphate serves as cofactor.

It catalyses the reaction 6-carboxyhexanoyl-[ACP] + L-alanine + H(+) = (8S)-8-amino-7-oxononanoate + holo-[ACP] + CO2. Its pathway is cofactor biosynthesis; biotin biosynthesis. Its function is as follows. Catalyzes the decarboxylative condensation of pimeloyl-[acyl-carrier protein] and L-alanine to produce 8-amino-7-oxononanoate (AON), [acyl-carrier protein], and carbon dioxide. This chain is Putative 8-amino-7-oxononanoate synthase (bioF), found in Paramagnetospirillum magneticum (strain ATCC 700264 / AMB-1) (Magnetospirillum magneticum).